The chain runs to 714 residues: MSAILNNYQYIPNNSLNSNNSNNGNNSTILSLCDNATQLMDIIMREFNEPIFDYNQNSSEINKSLVKTIKSLLETLTKNLNNINNNINNNISNNNNNNNNNNNNNNNNNNNNNNINNNNNFNTPQIIINDNYKLYTPPPAPMLKGLSCEVPFETMEYMQPLDLSNNNISLNNSCNMINNDNNNNNNNNNNNNNNNNNNNNQQQQFYNAPSSNSTPSHSSPSSPTTSSIPFHPNFTLSQDNFNQQLQNNNNSNNNSNNNNNNNIINNNFLQNSQQTNQSLQFSTTQPNLNNFYDIPKQPIICSSPIVNIPPPFYLDGSIDPVENIDWKRTKISDFNFYGSLGSGSFGTAKLCRHRGSGLFFCSKTLRRETIVHEKHKEHVNNEINIMLNISHPYIVKTYSTFNTPTKIHFIMEYAGKKDLFHHLRANKCFTEQTTKLIVAEIVLAIEYLHAENIIYRDLKPENILIDEKGHIKLTDFGFSKKTVGGKNTSSVCGTFDYMAPEILNSSNGHGKPVDWWALGVVVYELVTGKLPFSNSKESLLNRKADFQLIFQNSYLSDEIKDFIFQLLSVDPSKRLGTFDSCSIRNHKWFSDINWLHLESKYQIDGPLSTLNSFINCDFNINLLKKSKSYTEQQQQQQQLPQQQQQQQQNNQLFNQTLQQQNFNFHPIQPQQQQQQQFFNFQFNNNNFNNNNNNNNNFNEACTSNTCGGTTASIF.

Disordered stretches follow at residues 88 to 122 (NNNI…NNFN) and 174 to 266 (CNMI…IINN). 3 stretches are compositionally biased toward low complexity: residues 174 to 200 (CNMI…NNNN), 209 to 227 (PSSN…TTSS), and 240 to 266 (NFNQ…IINN). The Protein kinase domain occupies 334–589 (FNFYGSLGSG…SCSIRNHKWF (256 aa)). ATP contacts are provided by residues 340–348 (LGSGSFGTA) and Lys-363. Catalysis depends on Asp-457, which acts as the Proton acceptor. Thr-488 bears the Phosphothreonine mark.

It belongs to the protein kinase superfamily. AGC Ser/Thr protein kinase family.

The enzyme catalyses L-seryl-[protein] + ATP = O-phospho-L-seryl-[protein] + ADP + H(+). It carries out the reaction L-threonyl-[protein] + ATP = O-phospho-L-threonyl-[protein] + ADP + H(+). The chain is Developmentally-regulated protein kinase 1 (pkaD) from Dictyostelium discoideum (Social amoeba).